The primary structure comprises 410 residues: ACT domain-containing protein ACR10 (410 aa).

ACT domains lie at 22–105 (VITI…SESQ), 114–197 (LLKL…LVGP), and 245–324 (LIHI…VVMM).

Functionally, may bind amino acids. In Arabidopsis thaliana (Mouse-ear cress), this protein is ACT domain-containing protein ACR10.